Reading from the N-terminus, the 219-residue chain is Probable nicotinate-nucleotide adenylyltransferase (219 aa).

Belongs to the NadD family.

It catalyses the reaction nicotinate beta-D-ribonucleotide + ATP + H(+) = deamido-NAD(+) + diphosphate. It participates in cofactor biosynthesis; NAD(+) biosynthesis; deamido-NAD(+) from nicotinate D-ribonucleotide: step 1/1. Catalyzes the reversible adenylation of nicotinate mononucleotide (NaMN) to nicotinic acid adenine dinucleotide (NaAD). This is Probable nicotinate-nucleotide adenylyltransferase from Chromohalobacter salexigens (strain ATCC BAA-138 / DSM 3043 / CIP 106854 / NCIMB 13768 / 1H11).